The chain runs to 1042 residues: Glutamate dehydrogenase 2 (1042 aa).

The active site involves K596. The residue at position 763 (R763) is an ADP-ribosylarginine; by Legionella Lart1.

Belongs to the Glu/Leu/Phe/Val dehydrogenases family. Homodimer. (Microbial infection) ADP-ribosylated at Arg-763 by the Legionella pneumophila effector Lart1, which inhibits the glutamate dehydrogenase activity. Amoeba are natural hosts of Legionella, and ADP-ribosylation by Lart1 may promote Legionella parasitism.

The protein resides in the cytoplasm. It carries out the reaction L-glutamate + NAD(+) + H2O = 2-oxoglutarate + NH4(+) + NADH + H(+). Its activity is regulated as follows. Activity is stimulated by AMP. With respect to regulation, (Microbial infection) Inhibited by ADP-ribosylation. The protein is Glutamate dehydrogenase 2 (glud2) of Dictyostelium discoideum (Social amoeba).